A 106-amino-acid chain; its full sequence is UPF0145 protein azo0572 (106 aa).

This sequence belongs to the UPF0145 family.

The chain is UPF0145 protein azo0572 from Azoarcus sp. (strain BH72).